The sequence spans 358 residues: UDP-3-O-acylglucosamine N-acyltransferase (358 aa).

Histidine 248 (proton acceptor) is an active-site residue.

It belongs to the transferase hexapeptide repeat family. LpxD subfamily. In terms of assembly, homotrimer.

The catalysed reaction is a UDP-3-O-[(3R)-3-hydroxyacyl]-alpha-D-glucosamine + a (3R)-hydroxyacyl-[ACP] = a UDP-2-N,3-O-bis[(3R)-3-hydroxyacyl]-alpha-D-glucosamine + holo-[ACP] + H(+). It participates in bacterial outer membrane biogenesis; LPS lipid A biosynthesis. In terms of biological role, catalyzes the N-acylation of UDP-3-O-acylglucosamine using 3-hydroxyacyl-ACP as the acyl donor. Is involved in the biosynthesis of lipid A, a phosphorylated glycolipid that anchors the lipopolysaccharide to the outer membrane of the cell. The sequence is that of UDP-3-O-acylglucosamine N-acyltransferase from Synechococcus sp. (strain WH7803).